The chain runs to 683 residues: Probable serine/threonine-protein kinase HAL5-like (683 aa).

Disordered stretches follow at residues 1-90 (MPQQ…VSDE) and 157-200 (YPQN…SKKA). A compositionally biased stretch (low complexity) spans 36 to 48 (PSSAATSDSSEMS). A compositionally biased stretch (gly residues) spans 50 to 60 (AQGGRGNGLLG). Polar residues predominate over residues 69-85 (SPKSEAQFTQRNKSAES). Residues 364–670 (GKCIGMIGQG…IPKLLDTPWM (307 aa)) enclose the Protein kinase domain. ATP is bound by residues 370 to 378 (IGQGAYGTV) and K411. D521 functions as the Proton acceptor in the catalytic mechanism.

This sequence belongs to the protein kinase superfamily. CAMK Ser/Thr protein kinase family. NPR/HAL subfamily. HAL5 sub-subfamily.

The enzyme catalyses L-seryl-[protein] + ATP = O-phospho-L-seryl-[protein] + ADP + H(+). The catalysed reaction is L-threonyl-[protein] + ATP = O-phospho-L-threonyl-[protein] + ADP + H(+). In Eremothecium gossypii (strain ATCC 10895 / CBS 109.51 / FGSC 9923 / NRRL Y-1056) (Yeast), this protein is Probable serine/threonine-protein kinase HAL5-like.